The sequence spans 372 residues: L-selectin (372 aa).

Residues 1–28 (MIFPWKCQSTQRDLWNIFKLWGWTMLCC) form the signal peptide. Residues 29-38 (DFLAHHGTDC) constitute a propeptide that is removed on maturation. Over 39-332 (WTYHYSEKPM…FSMIKEGDYN (294 aa)) the chain is Extracellular. Residues 55-155 (RFCRDNYTDL…ACHKLKAALC (101 aa)) enclose the C-type lectin domain. Intrachain disulfides connect cysteine 57–cysteine 155, cysteine 128–cysteine 147, cysteine 128–cysteine 160, cysteine 160–cysteine 171, cysteine 165–cysteine 180, cysteine 182–cysteine 191, cysteine 197–cysteine 241, cysteine 227–cysteine 254, cysteine 259–cysteine 303, and cysteine 289–cysteine 316. Residues asparagine 60 and asparagine 104 are each glycosylated (N-linked (GlcNAc...) asparagine). 5 residues coordinate Ca(2+): glutamate 118, asparagine 120, glutamate 126, asparagine 143, and aspartate 144. The EGF-like domain occupies 156 to 192 (YTASCQPWSCSGHGECVEIINNYTCNCDVGYYGPQCQ). N-linked (GlcNAc...) asparagine glycosylation is present at asparagine 177. Sushi domains lie at 195–256 (IQCE…TCQV) and 257–318 (IQCE…ICQK). N-linked (GlcNAc...) asparagine glycosylation is found at asparagine 216, asparagine 232, asparagine 246, and asparagine 271. A helical membrane pass occupies residues 333–355 (PLFIPVAVMVTAFSGLAFIIWLA). Over 356–372 (RRLKKGKKSKRSMDDPY) the chain is Cytoplasmic.

The protein belongs to the selectin/LECAM family. As to quaternary structure, interaction with SELPLG/PSGL1 and PODXL2 is required for promoting recruitment and rolling of leukocytes. This interaction is dependent on the sialyl Lewis X glycan modification of SELPLG and PODXL2, and tyrosine sulfation modifications of SELPLG. Sulfation on 'Tyr-51' of SELPLG is important for L-selectin binding. N-glycosylated.

Its subcellular location is the cell membrane. In terms of biological role, calcium-dependent lectin that mediates cell adhesion by binding to glycoproteins on neighboring cells. Mediates the adherence of lymphocytes to endothelial cells of high endothelial venules in peripheral lymph nodes. Promotes initial tethering and rolling of leukocytes in endothelia. The sequence is that of L-selectin (SELL) from Pan troglodytes (Chimpanzee).